A 673-amino-acid chain; its full sequence is UvrABC system protein B (673 aa).

The 158-residue stretch at 26–183 folds into the Helicase ATP-binding domain; that stretch reads EGLEDGLAHQ…RRLAELQYTR (158 aa). 39-46 contributes to the ATP binding site; it reads GVTGSGKT. The Beta-hairpin motif lies at 92–115; it reads YYDYYQPEAYVPSSDTFIEKDASV. The Helicase C-terminal domain maps to 431–597; it reads QVDDLLSEIR…GLNKKVVDIL (167 aa). The region spanning 633 to 668 is the UVR domain; it reads QQKIHELEGQMMQHAQNLEFEEAAQIRDQLHQLREL.

The protein belongs to the UvrB family. As to quaternary structure, forms a heterotetramer with UvrA during the search for lesions. Interacts with UvrC in an incision complex.

It is found in the cytoplasm. Functionally, the UvrABC repair system catalyzes the recognition and processing of DNA lesions. A damage recognition complex composed of 2 UvrA and 2 UvrB subunits scans DNA for abnormalities. Upon binding of the UvrA(2)B(2) complex to a putative damaged site, the DNA wraps around one UvrB monomer. DNA wrap is dependent on ATP binding by UvrB and probably causes local melting of the DNA helix, facilitating insertion of UvrB beta-hairpin between the DNA strands. Then UvrB probes one DNA strand for the presence of a lesion. If a lesion is found the UvrA subunits dissociate and the UvrB-DNA preincision complex is formed. This complex is subsequently bound by UvrC and the second UvrB is released. If no lesion is found, the DNA wraps around the other UvrB subunit that will check the other stand for damage. The polypeptide is UvrABC system protein B (Klebsiella pneumoniae (strain 342)).